We begin with the raw amino-acid sequence, 426 residues long: Histidine--tRNA ligase (426 aa).

Belongs to the class-II aminoacyl-tRNA synthetase family. In terms of assembly, homodimer.

Its subcellular location is the cytoplasm. It catalyses the reaction tRNA(His) + L-histidine + ATP = L-histidyl-tRNA(His) + AMP + diphosphate + H(+). The sequence is that of Histidine--tRNA ligase from Streptococcus sanguinis (strain SK36).